Reading from the N-terminus, the 397-residue chain is Cytochrome b (397 aa).

Transmembrane regions (helical) follow at residues 38-58 (FGSL…FLAM), 82-104 (WLLR…LHIF), 119-139 (VWCL…IGYV), and 185-205 (FFSL…LHLA). Positions 88 and 102 each coordinate heme b. Residues His189 and His203 each contribute to the heme b site. Residue His208 participates in a ubiquinone binding. The next 4 helical transmembrane spans lie at 231 to 251 (FYVK…IWIF), 295 to 315 (AGGV…PFFK), 327 to 347 (IYQG…WIGC), and 354 to 373 (FVTI…AITP).

It belongs to the cytochrome b family. The main subunits of complex b-c1 are: cytochrome b, cytochrome c1 and the Rieske protein. The cofactor is heme b.

The protein resides in the mitochondrion inner membrane. Functionally, component of the ubiquinol-cytochrome c reductase complex (complex III or cytochrome b-c1 complex) that is part of the mitochondrial respiratory chain. The b-c1 complex mediates electron transfer from ubiquinol to cytochrome c. Contributes to the generation of a proton gradient across the mitochondrial membrane that is then used for ATP synthesis. This Oryza sativa subsp. japonica (Rice) protein is Cytochrome b (MT-CYB).